Here is a 749-residue protein sequence, read N- to C-terminus: 1,4-alpha-glucan branching enzyme GlgB (749 aa).

The active-site Nucleophile is the D415. E468 (proton donor) is an active-site residue.

Belongs to the glycosyl hydrolase 13 family. GlgB subfamily. As to quaternary structure, monomer.

The enzyme catalyses Transfers a segment of a (1-&gt;4)-alpha-D-glucan chain to a primary hydroxy group in a similar glucan chain.. The protein operates within glycan biosynthesis; glycogen biosynthesis. Catalyzes the formation of the alpha-1,6-glucosidic linkages in glycogen by scission of a 1,4-alpha-linked oligosaccharide from growing alpha-1,4-glucan chains and the subsequent attachment of the oligosaccharide to the alpha-1,6 position. This Nitrosococcus oceani (strain ATCC 19707 / BCRC 17464 / JCM 30415 / NCIMB 11848 / C-107) protein is 1,4-alpha-glucan branching enzyme GlgB.